The primary structure comprises 552 residues: Urocanate hydratase (552 aa).

Residues 49–50, glutamine 127, 173–175, aspartate 193, 239–240, 260–264, 270–271, and tyrosine 319 each bind NAD(+); these read GG, GMG, NA, QTSAH, and YV. Cysteine 407 is an active-site residue. Residue glycine 489 participates in NAD(+) binding.

Belongs to the urocanase family. NAD(+) serves as cofactor.

The protein resides in the cytoplasm. The catalysed reaction is 4-imidazolone-5-propanoate = trans-urocanate + H2O. It participates in amino-acid degradation; L-histidine degradation into L-glutamate; N-formimidoyl-L-glutamate from L-histidine: step 2/3. Catalyzes the conversion of urocanate to 4-imidazolone-5-propionate. The protein is Urocanate hydratase of Bacillus cytotoxicus (strain DSM 22905 / CIP 110041 / 391-98 / NVH 391-98).